Here is a 356-residue protein sequence, read N- to C-terminus: Serpentine receptor class epsilon-29 (356 aa).

The next 7 membrane-spanning stretches (helical) occupy residues 29–49 (IVELFSYLICAYILTLNIYII), 61–81 (ILAIPLFGIWFELIIGKLITI), 119–139 (LLIFGGFLQWHYMFTIIFGVL), 161–181 (LFIPLFLTVISQFLSISTSLA), 190–210 (FLAQLPWIICCPFSAMAYFFV), 251–271 (LVFVVLSCIALCGIGITALFY), and 281–301 (FVENFLFLHPYLSCLTAIFSV).

Belongs to the nematode receptor-like protein sre family.

It localises to the membrane. This is Serpentine receptor class epsilon-29 (sre-29) from Caenorhabditis elegans.